A 345-amino-acid chain; its full sequence is tRNA-dihydrouridine(20/20a) synthase (345 aa).

FMN contacts are provided by residues 26–28 and Gln78; that span reads PML. Residue Cys108 is the Proton donor of the active site. FMN contacts are provided by residues Lys147, His180, 220–222, and 242–243; these read NGG and GR.

Belongs to the Dus family. DusA subfamily. Requires FMN as cofactor.

The catalysed reaction is 5,6-dihydrouridine(20) in tRNA + NADP(+) = uridine(20) in tRNA + NADPH + H(+). It carries out the reaction 5,6-dihydrouridine(20) in tRNA + NAD(+) = uridine(20) in tRNA + NADH + H(+). The enzyme catalyses 5,6-dihydrouridine(20a) in tRNA + NADP(+) = uridine(20a) in tRNA + NADPH + H(+). It catalyses the reaction 5,6-dihydrouridine(20a) in tRNA + NAD(+) = uridine(20a) in tRNA + NADH + H(+). In terms of biological role, catalyzes the synthesis of 5,6-dihydrouridine (D), a modified base found in the D-loop of most tRNAs, via the reduction of the C5-C6 double bond in target uridines. Specifically modifies U20 and U20a in tRNAs. The chain is tRNA-dihydrouridine(20/20a) synthase from Yersinia pestis.